The chain runs to 63 residues: Large ribosomal subunit protein bL35 (63 aa).

Belongs to the bacterial ribosomal protein bL35 family.

This Campylobacter fetus subsp. fetus (strain 82-40) protein is Large ribosomal subunit protein bL35.